The primary structure comprises 419 residues: Dual specificity protein phosphatase 7 (419 aa).

Residues 1–41 (MKNQLRGPPVRAHMSTSGAAAAGGTRAGSEPGAGSGSSAGI) are disordered. The segment covering 15–30 (STSGAAAAGGTRAGSE) has biased composition (low complexity). Positions 31–41 (PGAGSGSSAGI) are enriched in gly residues. Positions 68 to 187 (GGASLLLLDC…FQTEYSEHCE (120 aa)) constitute a Rhodanese domain. Residues 216 to 240 (CSDGESDRELPSSATESDGSPVPSS) form a disordered region. Positions 227–240 (SSATESDGSPVPSS) are enriched in polar residues. Residues 244 to 387 (FPVQILPYLY…LLDFERTLGL (144 aa)) form the Tyrosine-protein phosphatase domain. Cys-331 functions as the Phosphocysteine intermediate in the catalytic mechanism. 331-337 (CLAGISR) provides a ligand contact to substrate.

It belongs to the protein-tyrosine phosphatase family. Non-receptor class dual specificity subfamily. As to quaternary structure, interacts with MAPK1/ERK2; the interaction enhances DUSP7 phosphatase activity.

The protein localises to the cytoplasm. It carries out the reaction O-phospho-L-tyrosyl-[protein] + H2O = L-tyrosyl-[protein] + phosphate. The enzyme catalyses O-phospho-L-seryl-[protein] + H2O = L-seryl-[protein] + phosphate. It catalyses the reaction O-phospho-L-threonyl-[protein] + H2O = L-threonyl-[protein] + phosphate. With respect to regulation, strongly inhibited by sodium orthovanadate. In terms of biological role, dual specificity protein phosphatase. Shows high activity towards MAPK1/ERK2. Also has lower activity towards MAPK14 and MAPK8. In arrested oocytes, plays a role in meiotic resumption. Promotes nuclear envelope breakdown and activation of the CDK1/Cyclin-B complex in oocytes, probably by dephosphorylating and inactivating the conventional protein kinase C (cPKC) isozyme PRKCB. May also inactivate PRKCA and/or PRKCG. Also important in oocytes for normal chromosome alignment on the metaphase plate and progression to anaphase, where it might regulate activity of the spindle-assembly checkpoint (SAC) complex. This Rattus norvegicus (Rat) protein is Dual specificity protein phosphatase 7.